The following is a 489-amino-acid chain: Kynureninase 2 (489 aa).

Over residues 1–12 (MDASAAISQLRQ) the composition is skewed to polar residues. The tract at residues 1–25 (MDASAAISQLRQGQKPEWPQNANTS) is disordered. Residues L149, T150, 177–180 (FPSD), D261, H264, and Y286 each bind pyridoxal 5'-phosphate. The residue at position 287 (K287) is an N6-(pyridoxal phosphate)lysine. W317 and N345 together coordinate pyridoxal 5'-phosphate.

This sequence belongs to the kynureninase family. Homodimer. Pyridoxal 5'-phosphate serves as cofactor.

Its subcellular location is the cytoplasm. The enzyme catalyses L-kynurenine + H2O = anthranilate + L-alanine + H(+). It carries out the reaction 3-hydroxy-L-kynurenine + H2O = 3-hydroxyanthranilate + L-alanine + H(+). Its pathway is amino-acid degradation; L-kynurenine degradation; L-alanine and anthranilate from L-kynurenine: step 1/1. The protein operates within cofactor biosynthesis; NAD(+) biosynthesis; quinolinate from L-kynurenine: step 2/3. Catalyzes the cleavage of L-kynurenine (L-Kyn) and L-3-hydroxykynurenine (L-3OHKyn) into anthranilic acid (AA) and 3-hydroxyanthranilic acid (3-OHAA), respectively. This Phaeosphaeria nodorum (strain SN15 / ATCC MYA-4574 / FGSC 10173) (Glume blotch fungus) protein is Kynureninase 2.